The following is an 87-amino-acid chain: Small ribosomal subunit protein uS17 (87 aa).

The protein belongs to the universal ribosomal protein uS17 family. As to quaternary structure, part of the 30S ribosomal subunit.

Functionally, one of the primary rRNA binding proteins, it binds specifically to the 5'-end of 16S ribosomal RNA. The polypeptide is Small ribosomal subunit protein uS17 (Aster yellows witches'-broom phytoplasma (strain AYWB)).